The chain runs to 418 residues: MNIFEELKARGLVFQTTDEQALVKALTEGQVSYYTGYDPTADSLHLGHLVAILTSRRLQLAGHKPYALVGGATGLIGDPSFKDAERSLQTKETVLEWSDKIKGQLSTFLDFENGDNKAELVNNYDWFSQISFIDFLRDVGKYFTVNYMMSKDSVKKRIETGISYTEFAYQIMQGYDFYELNDKHNVTLQIGGSDQWGNMTAGTELLRKKADKTGHVMTVPLITDSTGKKFGKSEGNAVWLDADKTSPYEMYQFWLNVMDDDAVRFLKIFTFLFLDEIAEIETQFNAARHERLAQKTLAREVVTLVHGEEAYKQALNITEQLFAGNIKNLSANELKQGLSNVPNYHVQSEDSLNLVDMLVTAGISPSKRQAREDVQNGAIYINGDRVQDLDYQLSNDDKIDDQLTVIRRGKKKYAVLTY.

An L-tyrosine-binding site is contributed by tyrosine 34. The 'HIGH' region motif lies at 39–48; the sequence is PTADSLHLGH. L-tyrosine-binding residues include tyrosine 169 and glutamine 173. A 'KMSKS' region motif is present at residues 229–233; the sequence is KFGKS. Lysine 232 contributes to the ATP binding site. The 67-residue stretch at 352 to 418 folds into the S4 RNA-binding domain; that stretch reads LNLVDMLVTA…GKKKYAVLTY (67 aa).

This sequence belongs to the class-I aminoacyl-tRNA synthetase family. TyrS type 1 subfamily. In terms of assembly, homodimer.

Its subcellular location is the cytoplasm. It catalyses the reaction tRNA(Tyr) + L-tyrosine + ATP = L-tyrosyl-tRNA(Tyr) + AMP + diphosphate + H(+). Functionally, catalyzes the attachment of tyrosine to tRNA(Tyr) in a two-step reaction: tyrosine is first activated by ATP to form Tyr-AMP and then transferred to the acceptor end of tRNA(Tyr). The sequence is that of Tyrosine--tRNA ligase from Streptococcus pyogenes serotype M28 (strain MGAS6180).